The sequence spans 318 residues: tRNA dimethylallyltransferase (318 aa).

Position 16–23 (Gly-16–Thr-23) interacts with ATP. Thr-18–Thr-23 serves as a coordination point for substrate. 4 interaction with substrate tRNA regions span residues Asp-41–Leu-44, Gln-165–Arg-169, Arg-246–Arg-251, and Lys-279–Arg-286.

The protein belongs to the IPP transferase family. As to quaternary structure, monomer. Mg(2+) is required as a cofactor.

It catalyses the reaction adenosine(37) in tRNA + dimethylallyl diphosphate = N(6)-dimethylallyladenosine(37) in tRNA + diphosphate. In terms of biological role, catalyzes the transfer of a dimethylallyl group onto the adenine at position 37 in tRNAs that read codons beginning with uridine, leading to the formation of N6-(dimethylallyl)adenosine (i(6)A). The protein is tRNA dimethylallyltransferase of Actinobacillus succinogenes (strain ATCC 55618 / DSM 22257 / CCUG 43843 / 130Z).